Consider the following 297-residue polypeptide: Guanylate kinase (297 aa).

One can recognise a Guanylate kinase-like domain in the interval 5–184; the sequence is GKVIIISGPS…AVSKITDILI (180 aa). Position 12–19 (12–19) interacts with ATP; sequence GPSGVGKG. The tract at residues 205–297 is unknown; that stretch reads ENIVDQKYTY…IKQRSDFSGD (93 aa).

Belongs to the guanylate kinase family.

Its subcellular location is the cytoplasm. The enzyme catalyses GMP + ATP = GDP + ADP. Functionally, essential for recycling GMP and indirectly, cGMP. In Mesoplasma florum (strain ATCC 33453 / NBRC 100688 / NCTC 11704 / L1) (Acholeplasma florum), this protein is Guanylate kinase (gmk).